Here is a 294-residue protein sequence, read N- to C-terminus: tRNA dimethylallyltransferase (294 aa).

Residue 10 to 17 (GPTAVGKT) participates in ATP binding. 12-17 (TAVGKT) is a substrate binding site. Residues 35–38 (DSQQ) form an interaction with substrate tRNA region.

This sequence belongs to the IPP transferase family. In terms of assembly, monomer. Mg(2+) is required as a cofactor.

The catalysed reaction is adenosine(37) in tRNA + dimethylallyl diphosphate = N(6)-dimethylallyladenosine(37) in tRNA + diphosphate. Its function is as follows. Catalyzes the transfer of a dimethylallyl group onto the adenine at position 37 in tRNAs that read codons beginning with uridine, leading to the formation of N6-(dimethylallyl)adenosine (i(6)A). This is tRNA dimethylallyltransferase from Streptococcus pneumoniae serotype 19F (strain G54).